The primary structure comprises 153 residues: Protein SprT-like (153 aa).

Positions 6–148 (LQQLTEQLSL…CGKCGGKIKE (143 aa)) constitute a SprT-like domain. Histidine 67 contacts Zn(2+). The active site involves glutamate 68. Histidine 71 lines the Zn(2+) pocket.

The protein belongs to the SprT family. Requires Zn(2+) as cofactor.

It localises to the cytoplasm. The chain is Protein SprT-like from Bacillus licheniformis (strain ATCC 14580 / DSM 13 / JCM 2505 / CCUG 7422 / NBRC 12200 / NCIMB 9375 / NCTC 10341 / NRRL NRS-1264 / Gibson 46).